Here is a 202-residue protein sequence, read N- to C-terminus: Hydrogenase expression/formation protein HoxM (202 aa).

Ni(2+) contacts are provided by Glu-15, Asp-61, and His-92.

It belongs to the peptidase A31 family.

Its function is as follows. Absolutely required for hydrogenase activity. Mediates the attachment of hydrogenase to the bacterial membrane; attachment is a requirement for enzymatic activity. This Cupriavidus necator (strain ATCC 17699 / DSM 428 / KCTC 22496 / NCIMB 10442 / H16 / Stanier 337) (Ralstonia eutropha) protein is Hydrogenase expression/formation protein HoxM (hoxM).